The following is a 24-amino-acid chain: Citropin-3.1.2 (24 aa).

Expressed by the dorsal and submental skin glands.

It localises to the secreted. This Ranoidea citropa (Australian Blue Mountains tree frog) protein is Citropin-3.1.2.